A 319-amino-acid chain; its full sequence is Annexin A4 (319 aa).

Ala-2 is modified (N-acetylalanine). Thr-7 is modified (phosphothreonine). The residue at position 12 (Ser-12) is a Phosphoserine. Annexin repeat units follow at residues 14–85 (FSAT…GMIT), 86–157 (PTVL…SLSA), 169–241 (ALMR…AIVK), and 245–316 (NKSA…ILCG). An N6-acetyllysine mark is found at Lys-213, Lys-293, and Lys-300.

This sequence belongs to the annexin family. Expressed in pancreas (at protein level). Also detected in liver, spleen, intestine, stomach, kidney, and adrenal glands.

The protein resides in the zymogen granule membrane. Its function is as follows. Calcium/phospholipid-binding protein which promotes membrane fusion and is involved in exocytosis. This is Annexin A4 (ANXA4) from Canis lupus familiaris (Dog).